The chain runs to 334 residues: Ornithine carbamoyltransferase subunit F (334 aa).

Carbamoyl phosphate contacts are provided by residues 56-59 (STRT), Gln-83, Arg-107, and 134-137 (HPTQ). Residues Asn-168, Asp-232, and 236–237 (SM) contribute to the L-ornithine site. Carbamoyl phosphate contacts are provided by residues 274 to 275 (CL) and Arg-320.

The protein belongs to the aspartate/ornithine carbamoyltransferase superfamily. OTCase family. In terms of assembly, in E.coli strain K12, trimer of identical or non-identical chains are composed of ArgI (I) and/or ArgF (F). The trimer has the following composition: FFI, FFF, FII, III. E.coli strains B and W, which are known to contain only ArgI, produce only a trimer of identical chains (III).

Its subcellular location is the cytoplasm. The enzyme catalyses carbamoyl phosphate + L-ornithine = L-citrulline + phosphate + H(+). It functions in the pathway amino-acid biosynthesis; L-arginine biosynthesis; L-arginine from L-ornithine and carbamoyl phosphate: step 1/3. Functionally, reversibly catalyzes the transfer of the carbamoyl group from carbamoyl phosphate (CP) to the N(epsilon) atom of ornithine (ORN) to produce L-citrulline, which is a substrate for argininosuccinate synthetase, the enzyme involved in the final step in arginine biosynthesis. The polypeptide is Ornithine carbamoyltransferase subunit F (Escherichia coli (strain K12)).